The following is a 133-amino-acid chain: Small ribosomal subunit protein uS8 (133 aa).

Belongs to the universal ribosomal protein uS8 family. In terms of assembly, part of the 30S ribosomal subunit. Contacts proteins S5 and S12.

Its function is as follows. One of the primary rRNA binding proteins, it binds directly to 16S rRNA central domain where it helps coordinate assembly of the platform of the 30S subunit. The polypeptide is Small ribosomal subunit protein uS8 (Deinococcus deserti (strain DSM 17065 / CIP 109153 / LMG 22923 / VCD115)).